A 138-amino-acid polypeptide reads, in one-letter code: Histone H3 (138 aa).

Positions 1-49 (MARTKQTARKSTGGKAPRKQLATKAARKQAPSQVSGGVKKPHRYRPGTV) are disordered. The residue at position 5 (lysine 5) is an N6,N6,N6-trimethyllysine; alternate. Lysine 5 is modified (N6,N6-dimethyllysine; alternate). N6-methyllysine; alternate is present on residues lysine 5 and lysine 10. Lysine 10 is modified (N6-acetyllysine; alternate). Residue serine 11 is modified to Phosphoserine. At lysine 15 the chain carries N6,N6-dimethyllysine; alternate. N6-methyllysine; alternate is present on residues lysine 15, lysine 19, lysine 24, lysine 28, and lysine 39. An N6-acetyllysine; alternate mark is found at lysine 15, lysine 19, lysine 24, lysine 28, and lysine 39. Residues lysine 28 and lysine 39 each carry the N6,N6,N6-trimethyllysine; alternate modification. An N6,N6-dimethyllysine; alternate mark is found at lysine 28 and lysine 39. Residues lysine 59 and lysine 67 each carry the N6-acetyllysine modification. The residue at position 82 (lysine 82) is an N6,N6,N6-trimethyllysine; alternate. Lysine 82 bears the N6,N6-dimethyllysine; alternate mark. At lysine 82 the chain carries N6-methyllysine; alternate.

The protein belongs to the histone H3 family. As to quaternary structure, the nucleosome is a histone octamer containing two molecules each of H2A, H2B, H3 and H4 assembled in one H3-H4 heterotetramer and two H2A-H2B heterodimers. The octamer wraps approximately 147 bp of DNA. Phosphorylated to form H3S10ph. H3S10ph promotes subsequent H3K14ac formation and is required for transcriptional activation through TBP recruitment to the promoters. In terms of processing, mono-, di- and trimethylated by the COMPASS complex to form H3K4me1/2/3. H3K4me activates gene expression by regulating transcription elongation and plays a role in telomere length maintenance. H3K4me enrichment correlates with transcription levels, and occurs in a 5' to 3' gradient with H3K4me3 enrichment at the 5'-end of genes, shifting to H3K4me2 and then H3K4me1. Methylated by SET2 to form H3K36me. H3K36me represses gene expression. Methylated by DOT1 to form H3K79me. H3K79me is required for association of SIR proteins with telomeric regions and for telomeric silencing. The COMPASS-mediated formation of H3K4me2/3 and the DOT1-mediated formation of H3K79me require H2BK123ub1. Post-translationally, acetylation of histone H3 leads to transcriptional activation. H3K14ac formation by GCN5 is promoted by H3S10ph. H3K14ac can also be formed by ESA1. H3K56ac formation occurs predominantly in newly synthesized H3 molecules during G1, S and G2/M of the cell cycle and may be involved in DNA repair.

Its subcellular location is the nucleus. It localises to the chromosome. Functionally, core component of nucleosome. Nucleosomes wrap and compact DNA into chromatin, limiting DNA accessibility to the cellular machineries which require DNA as a template. Histones thereby play a central role in transcription regulation, DNA repair, DNA replication and chromosomal stability. DNA accessibility is regulated via a complex set of post-translational modifications of histones, also called histone code, and nucleosome remodeling. This is Histone H3 (HHT1) from Cryptococcus neoformans var. neoformans serotype D (strain B-3501A) (Filobasidiella neoformans).